The chain runs to 329 residues: Alpha/beta hydrolase domain-containing protein 17C (329 aa).

Residues 46-85 are disordered; the sequence is APEQRGPGAPAPASAASTSSASAAAQPAPQQPEEGGAGPG. A compositionally biased stretch (low complexity) spans 51-79; sequence GPGAPAPASAASTSSASAAAQPAPQQPEE. Catalysis depends on charge relay system residues Ser-211, Asp-276, and His-305.

It belongs to the AB hydrolase superfamily. ABHD17 family. Palmitoylated on cysteine residues located in a cysteine cluster at the N-terminus which promotes membrane localization. Palmitoylation is required for post-synaptic localization and for depalmitoylating activity towards DLG4/PSD95.

The protein localises to the recycling endosome membrane. It localises to the cell projection. Its subcellular location is the dendritic spine. It is found in the postsynaptic density membrane. The enzyme catalyses S-hexadecanoyl-L-cysteinyl-[protein] + H2O = L-cysteinyl-[protein] + hexadecanoate + H(+). Functionally, hydrolyzes fatty acids from S-acylated cysteine residues in proteins. Has depalmitoylating activity towards NRAS and DLG4/PSD95. The chain is Alpha/beta hydrolase domain-containing protein 17C from Bos taurus (Bovine).